Consider the following 260-residue polypeptide: DNA import protein CedA (260 aa).

6 helical membrane passes run 13 to 33, 47 to 67, 110 to 130, 140 to 160, 169 to 189, and 220 to 240; these read LLAS…VPVY, IYVV…GELL, ALIQ…ALTF, IVYQ…SIPF, AFIG…QFLA, and IITS…GFSM.

Forms a complex composed of CedA, CedA1 and CedA2.

Its subcellular location is the cell membrane. Functionally, part of the Ced system, which is involved in DNA import. The chain is DNA import protein CedA from Sulfolobus acidocaldarius (strain ATCC 33909 / DSM 639 / JCM 8929 / NBRC 15157 / NCIMB 11770).